A 338-amino-acid polypeptide reads, in one-letter code: MSPSIAMFTLTPNARALASKTSKMDLIKNLRERTGAPIVDVKAALTAHDYDSEAAYDALRAKGLAAAAKKAGRTSADGAVAALSGDRGVVLFEVNSETDFVARGESFQSLIKECAEATLRAVESDRAMTEEHGTATAGALRALRDERIGELLTSDGKPLSDAVRDVAVHVRENVRLRRAFAYAATVGAGEVIGTYVHGALAPGVGKQAACVVAKGVSEEFANKLAMHVVASSPLYLRSDCVPTDVMERELAVFRTQTEGSGKPANIVEKILAGRMNKYYEEVCLENQKFILDDSMTVEKAVKAEGGELVAFSRVKVGEGIEVEEKDFAAEVAEAVRTT.

The N-terminal 42 residues, 1–42, are a transit peptide targeting the mitochondrion; sequence MSPSIAMFTLTPNARALASKTSKMDLIKNLRERTGAPIVDVK.

The protein belongs to the EF-Ts family.

The protein localises to the mitochondrion. In terms of biological role, associates with the EF-Tu.GDP complex and induces the exchange of GDP to GTP. It remains bound to the aminoacyl-tRNA.EF-Tu.GTP complex up to the GTP hydrolysis stage on the ribosome. The protein is Elongation factor Ts, mitochondrial of Ostreococcus tauri.